We begin with the raw amino-acid sequence, 219 residues long: 7-carboxy-7-deazaguanine synthase (219 aa).

Substrate-binding positions include 22–24 (IQG) and Arg37. Residues 28–219 (LVGLPSVFIR…PQVHKCFDLK (192 aa)) enclose the Radical SAM core domain. The [4Fe-4S] cluster site is built by Cys41, Cys45, and Cys48. Thr81 provides a ligand contact to substrate. S-adenosyl-L-methionine-binding positions include Gly83 and 130–132 (SPK).

The protein belongs to the radical SAM superfamily. 7-carboxy-7-deazaguanine synthase family. As to quaternary structure, homodimer. [4Fe-4S] cluster serves as cofactor. Requires S-adenosyl-L-methionine as cofactor. The cofactor is Mg(2+).

The catalysed reaction is 6-carboxy-5,6,7,8-tetrahydropterin + H(+) = 7-carboxy-7-deazaguanine + NH4(+). The protein operates within purine metabolism; 7-cyano-7-deazaguanine biosynthesis. Functionally, catalyzes the complex heterocyclic radical-mediated conversion of 6-carboxy-5,6,7,8-tetrahydropterin (CPH4) to 7-carboxy-7-deazaguanine (CDG), a step common to the biosynthetic pathways of all 7-deazapurine-containing compounds. This chain is 7-carboxy-7-deazaguanine synthase, found in Aquifex aeolicus (strain VF5).